The chain runs to 277 residues: Large ribosomal subunit protein uL2 (277 aa).

The segment at Ser223–Lys261 is disordered.

It belongs to the universal ribosomal protein uL2 family. As to quaternary structure, part of the 50S ribosomal subunit. Forms a bridge to the 30S subunit in the 70S ribosome.

In terms of biological role, one of the primary rRNA binding proteins. Required for association of the 30S and 50S subunits to form the 70S ribosome, for tRNA binding and peptide bond formation. It has been suggested to have peptidyltransferase activity; this is somewhat controversial. Makes several contacts with the 16S rRNA in the 70S ribosome. The chain is Large ribosomal subunit protein uL2 from Clostridium botulinum (strain Alaska E43 / Type E3).